The primary structure comprises 27 residues: CD59 glycoprotein (27 aa).

2 disulfides stabilise this stretch: cysteine 3-cysteine 25 and cysteine 6-cysteine 12. A glycan (N-linked (GlcNAc...) asparagine) is linked at asparagine 17.

Interacts with T-cell surface antigen CD2. In terms of processing, N- and O-glycosylated. As to expression, expressed in erythrocytes and lymphocytes. Not detected in platelets.

The protein resides in the cell membrane. It is found in the secreted. In terms of biological role, potent inhibitor of the complement membrane attack complex (MAC) action, which protects self-cells from damage during complement activation. Acts by binding to the beta-haipins of C8 (C8A and C8B) components of the assembling MAC, forming an intermolecular beta-sheet that prevents incorporation of the multiple copies of C9 required for complete formation of the osmolytic pore. The sequence is that of CD59 glycoprotein from Ovis aries (Sheep).